Reading from the N-terminus, the 1340-residue chain is Protein SHORT ROOT IN SALT MEDIUM 1 (1340 aa).

Disordered regions lie at residues Met-1 to Leu-73, Tyr-161 to Ser-185, Glu-357 to Ser-473, Thr-723 to Val-750, Pro-784 to Ala-990, and Arg-1063 to Glu-1269. The segment covering Ser-7 to Gly-39 has biased composition (low complexity). A compositionally biased stretch (polar residues) spans Gln-46 to Pro-60. Basic and acidic residues-rich tracts occupy residues Leu-173–Ala-182, Glu-357–Ile-470, and Thr-723–Pro-735. The stretch at Leu-355 to Lys-426 forms a coiled coil. Polar residues predominate over residues Gly-810–Pro-824. A compositionally biased stretch (basic residues) spans Ile-828–Arg-840. 4 stretches are compositionally biased toward basic and acidic residues: residues Lys-841–Ser-872, Glu-887–Pro-988, His-1069–Ala-1097, and Pro-1105–Gly-1138. Residues Leu-1052 to Arg-1086 are a coiled coil. Residues Glu-1153–Glu-1204 show a composition bias toward acidic residues. Basic and acidic residues-rich tracts occupy residues Glu-1205–Glu-1214 and Thr-1229–Gln-1257. The EF-hand domain maps to Thr-1270–Phe-1305.

As to quaternary structure, interacts with BHLH148/RITF1. As to expression, expressed ubiquitously at high levels, including in guard cells.

The protein resides in the nucleus. Its function is as follows. Required for salt tolerance and sodium (Na) homeostasis after salt stress. Together with BHLH148/RITF1, regulates the transcription of several genes involved in the detoxification of reactive oxygen species (ROS) generated by salt (NaCl) stress. Binds calcium. This chain is Protein SHORT ROOT IN SALT MEDIUM 1, found in Arabidopsis thaliana (Mouse-ear cress).